The following is a 221-amino-acid chain: GTP cyclohydrolase III (221 aa).

Belongs to the archaeal-type GTP cyclohydrolase family.

It carries out the reaction GTP + 3 H2O = 2-amino-5-formylamino-6-(5-phospho-D-ribosylamino)pyrimidin-4(3H)-one + 2 phosphate + 2 H(+). In terms of biological role, catalyzes the formation of 2-amino-5-formylamino-6-ribofuranosylamino-4(3H)-pyrimidinone ribonucleotide monophosphate and inorganic phosphate from GTP. Also has an independent pyrophosphate phosphohydrolase activity. The chain is GTP cyclohydrolase III from Pyrobaculum arsenaticum (strain DSM 13514 / JCM 11321 / PZ6).